The chain runs to 505 residues: Tubby protein homolog (505 aa).

Positions 35–243 are disordered; that stretch reads EQKQKKKRQE…PSPAAPEPPV (209 aa). Positions 70–87 are enriched in low complexity; that stretch reads LVESYLSSSGSTSYQVQE. Residues 196-205 are compositionally biased toward acidic residues; it reads FDEEEDEDEN. Over residues 206–220 the composition is skewed to low complexity; sequence SSSSSQLNSNTRPSS.

Belongs to the TUB family. Interacts with GNAQ. Interacts with TULP1.

Its subcellular location is the cytoplasm. The protein resides in the nucleus. It is found in the secreted. The protein localises to the cell membrane. Functions in signal transduction from heterotrimeric G protein-coupled receptors. Binds to membranes containing phosphatidylinositol 4,5-bisphosphate. Can bind DNA (in vitro). May contribute to the regulation of transcription in the nucleus. Could be involved in the hypothalamic regulation of body weight. Contribute to stimulation of phagocytosis of apoptotic retinal pigment epithelium (RPE) cells and macrophages. The protein is Tubby protein homolog (Tub) of Rattus norvegicus (Rat).